A 906-amino-acid chain; its full sequence is Microtubule-associated protein 6 (906 aa).

The calmodulin-binding stretch occupies residues 1-15 (MAWPCITRACCIARF). 3 S-palmitoyl cysteine lipidation sites follow: Cys5, Cys10, and Cys11. Disordered stretches follow at residues 37-56 (TEHP…ALAP), 65-411 (TQPA…RAVA), 441-651 (KPVK…GPVK), 674-782 (NKDS…TAPR), and 817-906 (AKDQ…EGSP). Over residues 41-50 (GAPPQPPAPL) the composition is skewed to pro residues. Over residues 93–117 (AAPGRSGLGLGAASASTSGSGPADS) the composition is skewed to low complexity. Ser98 bears the Phosphoserine mark. The mn 1 stretch occupies residues 116-139 (DSVMRQDYRAWKVQRPEPSCRPRS). Basic and acidic residues predominate over residues 119 to 139 (MRQDYRAWKVQRPEPSCRPRS). Positions 124–138 (RAWKVQRPEPSCRPR) are calmodulin-binding. Tyr141 carries the post-translational modification Phosphotyrosine. The segment covering 147–171 (PFERETQYQKDFRAWPLPRRGDHPW) has biased composition (basic and acidic residues). A mn 2 region spans residues 151–174 (ETQYQKDFRAWPLPRRGDHPWIPK). A calmodulin-binding region spans residues 160-174 (AWPLPRRGDHPWIPK). Position 185 is a phosphoserine (Ser185). Residues 187 to 201 (PVLGVPKRRPQSQER) are calmodulin-binding. Ser207 is modified (phosphoserine). A Mc-1 repeat occupies 222-267 (LAAGKASGVDQRDTRRKAGPAWMVTRNEGHEEKPLPPAQSQTQEGG). The tract at residues 222 to 405 (LAAGKASGVD…HAQGTGPEGG (184 aa)) is 4 X approximate tandem repeat Mc. Calmodulin-binding stretches follow at residues 235-249 (TRRK…TRNE), 280-294 (DTRR…VTRS), 325-339 (RDTR…MVTR), 375-389 (RKAG…SEGH), 435-449 (RAWT…IKAK), 486-500 (RRRI…FKEC), and 513-527 (PKKT…RKAK). The stretch at 268-313 (PAAGKASGADQRDTRRKAGPAWMVTRSEGHEEKPLPPAQSQTQEGG) is one Mc-2 repeat. Residues 314–359 (PAAGKASGADQRDTRRKAGPAWMVTRTEGHEETPLPPAQSQTQEGG) form a Mc-3 repeat. One copy of the Mc-4 repeat lies at 360–405 (PAAGKASGADERDTRRKAGPAWMVRRSEGHEQTPAAHAQGTGPEGG). The segment at 427-450 (SSSYRNEFRAWTDIKPVKPIKAKP) is mn 3. Basic and acidic residues predominate over residues 496–505 (PFKECPKVEK). A compositionally biased stretch (basic residues) spans 512 to 527 (KPKKTSTSHKPPRKAK). Over residues 549-573 (KPDDKEQSKEMNNKLAEAKESRVKP) the composition is skewed to basic and acidic residues. Phosphoserine is present on residues Ser632 and Ser687. The span at 695-711 (KNQSPVVPASTKDQSFP) shows a compositional bias: polar residues. Basic and acidic residues predominate over residues 715-742 (PRKDPGPVIPEPEKDRAPTVPERRKDQH). Phosphoserine is present on Ser905.

The protein belongs to the STOP family. As to quaternary structure, interacts with calmodulin (via C-terminus); the interaction is dependent on Ca(2+). Interacts (via C-terminus) with TMEM106B (via N-terminus). Interacts with ZDHHC13 (via ANK repeats). Interacts with ZDHHC17 (via ANK repeats). In terms of processing, palmitoylated. Probably depalmitoylated by ABHD17A, ABHD17B and ABHD17C. During neuronal polarization, palmitoylation and depalmitoylation cycles regulate MAP6 shuttling between secretory vesicles and microtubules, and its polarized distribution in the axon. In terms of tissue distribution, isoform 1 is specifically expressed in adult brain. Isoform 2 is predominantly expressed in embryonic brain; expression persists at low levels in the adult brain. Isoform 3 is expressed at high levels in lung and at lower levels in testis, heart, muscle and kidney (at protein level). Oligodendrocytes express a major isoform of 89 kDa (O-STOP). Astrocytes also express an isoform of 60 kDa (A-STOP).

It localises to the cytoplasm. Its subcellular location is the cytoskeleton. It is found in the golgi apparatus. The protein localises to the cell projection. The protein resides in the axon. It localises to the dendrite. Its subcellular location is the cytoplasmic vesicle. It is found in the secretory vesicle membrane. Functionally, involved in microtubule stabilization in many cell types, including neuronal cells. Specifically has microtubule cold stabilizing activity. Involved in dendrite morphogenesis and maintenance by regulating lysosomal trafficking via its interaction with TMEM106B. Regulates KIF5A-mediated axonal cargo transport. Regulates axonal growth during neuron polarization. The protein is Microtubule-associated protein 6 (Map6) of Mus musculus (Mouse).